The primary structure comprises 308 residues: Eugenol synthase 1 (308 aa).

Residues 13–16 (TGYI), 35–45 (VRESTVSDPAK), arginine 36, 86–88 (QMQ), 111–113 (SEF), lysine 133, and 153–155 (NCF) contribute to the NADP(+) site. Residue lysine 133 is the Proton donor/acceptor of the active site.

The protein belongs to the NmrA-type oxidoreductase family. In flowers, mostly expressed in limbs, and, to a lower extent, in tubes.

It carries out the reaction eugenol + a carboxylate + NADP(+) = a coniferyl ester + NADPH. The catalysed reaction is eugenol + acetate + NADP(+) = (E)-coniferyl acetate + NADPH. It participates in aromatic compound metabolism; phenylpropanoid biosynthesis. In terms of biological role, involved in the biosynthesis of the floral volatile eugenol. Catalyzes the synthesis of the phenylpropene eugenol from coniferyl acetate. Phenylpropenes are produced by plants as defense compounds with antimicrobial and antianimal properties, or as floral attractants of pollinators. The chain is Eugenol synthase 1 from Petunia hybrida (Petunia).